Reading from the N-terminus, the 546-residue chain is Probable protein kinase UbiB (546 aa).

The region spanning 124–502 (DFDIQPLASA…HVRQSQSRYL (379 aa)) is the Protein kinase domain. ATP-binding positions include 130–138 (LASASIAQV) and Lys-153. The active-site Proton acceptor is Asp-288. A run of 2 helical transmembrane segments spans residues 501–521 (YLLGIGATLLLSGSFLLVNRP) and 522–542 (EWGLMPSWLMVGGVVVWLVGW).

The protein belongs to the ABC1 family. UbiB subfamily.

Its subcellular location is the cell inner membrane. Its pathway is cofactor biosynthesis; ubiquinone biosynthesis [regulation]. Its function is as follows. Is probably a protein kinase regulator of UbiI activity which is involved in aerobic coenzyme Q (ubiquinone) biosynthesis. In Salmonella gallinarum (strain 287/91 / NCTC 13346), this protein is Probable protein kinase UbiB.